A 225-amino-acid polypeptide reads, in one-letter code: Uridylate kinase (225 aa).

Asp-6 contributes to the Mg(2+) binding site. 9–10 (GS) serves as a coordination point for ATP. Gly-44 serves as a coordination point for UMP. ATP contacts are provided by Gly-45 and Arg-49. Residues Asp-66 and 114–120 (THPGHTT) each bind UMP. Positions 120 and 121 each coordinate Mg(2+). Thr-140, Asn-141, Tyr-146, and Asp-149 together coordinate ATP. Position 179 (Gly-179) interacts with UMP. Ser-182 provides a ligand contact to Mg(2+). Ser-182 provides a ligand contact to ATP.

Belongs to the UMP kinase family. In terms of assembly, homohexamer; trimer of dimers.

Its subcellular location is the cytoplasm. It catalyses the reaction UMP + ATP = UDP + ADP. It functions in the pathway pyrimidine metabolism; CTP biosynthesis via de novo pathway; UDP from UMP (UMPK route): step 1/1. Its activity is regulated as follows. Inhibited by UTP. Functionally, catalyzes the reversible phosphorylation of UMP to UDP, with ATP as the most efficient phosphate donor. The polypeptide is Uridylate kinase (pyrH) (Pyrococcus furiosus (strain ATCC 43587 / DSM 3638 / JCM 8422 / Vc1)).